A 509-amino-acid chain; its full sequence is Major envelope glycoprotein (509 aa).

The N-terminal stretch at 1–17 (MVRTAVLILLLVRFSEP) is a signal peptide. Residues asparagine 34, asparagine 156, asparagine 194, asparagine 351, asparagine 381, and asparagine 423 are each glycosylated (N-linked (GlcNAc...) asparagine; by host). Residue serine 479 is the site of O-palmitoyl serine; by host attachment. Residues 480 to 502 (FMLGHAFSFMLTVGVIIFLFCMV) traverse the membrane as a helical segment. A glycan (N-linked (GlcNAc...) asparagine; by host) is linked at asparagine 504.

The protein belongs to the baculoviridae gp64 family. Palmitoylated.

It localises to the virion membrane. The protein localises to the host cell membrane. Functionally, envelope phosphoglycoprotein which mediates the fusion of viral and host endosomal membranes leading to virus entry into the host cell. The polypeptide is Major envelope glycoprotein (GP67) (Choristoneura fumiferana nuclear polyhedrosis virus (CfMNPV)).